A 48-amino-acid chain; its full sequence is ARRRHSMKKKRKSVRRRKTRKNQRKRKNSLGRSFKAHGFLKQPPRFRP.

A compositionally biased stretch (basic residues) spans 1–29 (ARRRHSMKKKRKSVRRRKTRKNQRKRKNS). The disordered stretch occupies residues 1-48 (ARRRHSMKKKRKSVRRRKTRKNQRKRKNSLGRSFKAHGFLKQPPRFRP).

As to expression, testis.

Its subcellular location is the nucleus. It is found in the chromosome. Its function is as follows. Protamines substitute for histones in the chromatin of sperm during the haploid phase of spermatogenesis. They compact sperm DNA into a highly condensed, stable and inactive complex. The sequence is that of Sperm protamine R3 isoform 2 from Hydrolagus colliei (Spotted ratfish).